The chain runs to 215 residues: Thiamine-phosphate synthase (215 aa).

4-amino-2-methyl-5-(diphosphooxymethyl)pyrimidine-binding positions include 43–47 (QLRDK) and N75. 2 residues coordinate Mg(2+): D76 and D95. S114 is a 4-amino-2-methyl-5-(diphosphooxymethyl)pyrimidine binding site. 141-143 (TPT) is a 2-[(2R,5Z)-2-carboxy-4-methylthiazol-5(2H)-ylidene]ethyl phosphate binding site. 4-amino-2-methyl-5-(diphosphooxymethyl)pyrimidine is bound at residue K144. Position 172 (G172) interacts with 2-[(2R,5Z)-2-carboxy-4-methylthiazol-5(2H)-ylidene]ethyl phosphate.

Belongs to the thiamine-phosphate synthase family. The cofactor is Mg(2+).

It catalyses the reaction 2-[(2R,5Z)-2-carboxy-4-methylthiazol-5(2H)-ylidene]ethyl phosphate + 4-amino-2-methyl-5-(diphosphooxymethyl)pyrimidine + 2 H(+) = thiamine phosphate + CO2 + diphosphate. It carries out the reaction 2-(2-carboxy-4-methylthiazol-5-yl)ethyl phosphate + 4-amino-2-methyl-5-(diphosphooxymethyl)pyrimidine + 2 H(+) = thiamine phosphate + CO2 + diphosphate. The catalysed reaction is 4-methyl-5-(2-phosphooxyethyl)-thiazole + 4-amino-2-methyl-5-(diphosphooxymethyl)pyrimidine + H(+) = thiamine phosphate + diphosphate. It functions in the pathway cofactor biosynthesis; thiamine diphosphate biosynthesis; thiamine phosphate from 4-amino-2-methyl-5-diphosphomethylpyrimidine and 4-methyl-5-(2-phosphoethyl)-thiazole: step 1/1. Functionally, condenses 4-methyl-5-(beta-hydroxyethyl)thiazole monophosphate (THZ-P) and 2-methyl-4-amino-5-hydroxymethyl pyrimidine pyrophosphate (HMP-PP) to form thiamine monophosphate (TMP). The polypeptide is Thiamine-phosphate synthase (Streptomyces avermitilis (strain ATCC 31267 / DSM 46492 / JCM 5070 / NBRC 14893 / NCIMB 12804 / NRRL 8165 / MA-4680)).